A 340-amino-acid polypeptide reads, in one-letter code: Glyceraldehyde-3-phosphate dehydrogenase (340 aa).

NAD(+) is bound by residues 11–12 (SI) and G111. D-glyceraldehyde 3-phosphate is bound at residue 140-142 (SCN). The Nucleophile role is filled by C141. Residue R169 coordinates NAD(+). 195-196 (HG) is a D-glyceraldehyde 3-phosphate binding site. Q303 is an NAD(+) binding site.

It belongs to the glyceraldehyde-3-phosphate dehydrogenase family. As to quaternary structure, homotetramer.

It is found in the cytoplasm. It carries out the reaction D-glyceraldehyde 3-phosphate + phosphate + NADP(+) = (2R)-3-phospho-glyceroyl phosphate + NADPH + H(+). The catalysed reaction is D-glyceraldehyde 3-phosphate + phosphate + NAD(+) = (2R)-3-phospho-glyceroyl phosphate + NADH + H(+). The protein operates within carbohydrate degradation; glycolysis; pyruvate from D-glyceraldehyde 3-phosphate: step 1/5. The polypeptide is Glyceraldehyde-3-phosphate dehydrogenase (Methanococcus maripaludis (strain C6 / ATCC BAA-1332)).